We begin with the raw amino-acid sequence, 218 residues long: Adenylate kinase (218 aa).

ATP is bound at residue 10-15 (GAGKGT). Residues 30-59 (STGDMLRAAVKAGSPLGLKVKEVMATGGLV) are NMP. AMP is bound by residues Thr31, Arg36, 57–59 (GLV), 85–88 (GFPR), and Gln92. The interval 122–159 (GRRVHEASGRVYHVDYNPPKVEGKDDVTGEPLVQREDD) is LID. Residues Arg123 and 132–133 (VY) contribute to the ATP site. AMP contacts are provided by Arg156 and Arg167. Residue Gly203 participates in ATP binding.

Belongs to the adenylate kinase family. Monomer.

It is found in the cytoplasm. The enzyme catalyses AMP + ATP = 2 ADP. It participates in purine metabolism; AMP biosynthesis via salvage pathway; AMP from ADP: step 1/1. Its function is as follows. Catalyzes the reversible transfer of the terminal phosphate group between ATP and AMP. Plays an important role in cellular energy homeostasis and in adenine nucleotide metabolism. This chain is Adenylate kinase, found in Hahella chejuensis (strain KCTC 2396).